The primary structure comprises 274 residues: Large ribosomal subunit protein uL2c (274 aa).

Disordered regions lie at residues 1-22 (MAIH…DSQV) and 225-254 (PVDH…PALG).

This sequence belongs to the universal ribosomal protein uL2 family. In terms of assembly, part of the 50S ribosomal subunit.

It is found in the plastid. The protein localises to the chloroplast. The polypeptide is Large ribosomal subunit protein uL2c (rpl2) (Sinapis alba (White mustard)).